Reading from the N-terminus, the 168-residue chain is MSDNAIHIDIMIEAGNWPDEASLESLVSKSVAAAWNNLGLKSATSELSVVFTDDASIQLLNGEWRGKDKPTNVLSFPAFPVKAGSQPGPMLGDIVIARETVEREAKEEGKPIENHLSHLVVHGFLHLLGYDHETDEEAEVMEAREREILHALAIPDPYAVSDEDINND.

Positions 122, 126, and 132 each coordinate Zn(2+).

The protein belongs to the endoribonuclease YbeY family. Requires Zn(2+) as cofactor.

It is found in the cytoplasm. Functionally, single strand-specific metallo-endoribonuclease involved in late-stage 70S ribosome quality control and in maturation of the 3' terminus of the 16S rRNA. This chain is Endoribonuclease YbeY, found in Brucella abortus (strain 2308).